The following is a 424-amino-acid chain: Glutamyl-tRNA reductase (424 aa).

Residues 49-52, S105, 110-112, and Q116 contribute to the substrate site; these read TCNR and EPQ. Residue C50 is the Nucleophile of the active site. 185–190 contributes to the NADP(+) binding site; sequence GSGETA.

Belongs to the glutamyl-tRNA reductase family. As to quaternary structure, homodimer.

It catalyses the reaction (S)-4-amino-5-oxopentanoate + tRNA(Glu) + NADP(+) = L-glutamyl-tRNA(Glu) + NADPH + H(+). It participates in porphyrin-containing compound metabolism; protoporphyrin-IX biosynthesis; 5-aminolevulinate from L-glutamyl-tRNA(Glu): step 1/2. In terms of biological role, catalyzes the NADPH-dependent reduction of glutamyl-tRNA(Glu) to glutamate 1-semialdehyde (GSA). This is Glutamyl-tRNA reductase from Legionella pneumophila (strain Lens).